The following is a 1285-amino-acid chain: Protein crumbs homolog 2 (1285 aa).

The first 28 residues, 1-28 (MALARPGTPDPQALASVLLLLLWAPALS), serve as a signal peptide directing secretion. The segment at 1 to 350 (MALARPGTPD…GFQCHCPDGY (350 aa)) is required for maximum inhibition of APP amyloid-beta peptide secretion. The region spanning 67–106 (EPRGCATQPCHHGALCVPQGPDPTGFRCYCVPGFQGPRCE) is the EGF-like 1 domain. Cystine bridges form between Cys71–Cys82, Cys76–Cys94, Cys96–Cys105, Cys112–Cys123, Cys117–Cys132, Cys134–Cys143, Cys150–Cys161, Cys155–Cys170, Cys172–Cys181, Cys188–Cys199, Cys193–Cys208, Cys210–Cys220, Cys227–Cys238, Cys232–Cys247, Cys249–Cys258, Cys265–Cys276, Cys270–Cys306, Cys308–Cys317, Cys324–Cys335, Cys329–Cys344, Cys346–Cys355, Cys362–Cys373, Cys367–Cys382, Cys384–Cys393, Cys400–Cys411, Cys405–Cys424, and Cys426–Cys435. The region spanning 108–144 (DIDECASRPCHHGATCRNLADRYECHCPLGYAGVTCE) is the EGF-like 2; calcium-binding domain. The EGF-like 3; calcium-binding domain occupies 146–182 (EVDECASAPCLHGGSCLDGVGSFRCVCAPGYGGTRCQ). One can recognise an EGF-like 4; calcium-binding domain in the interval 184 to 221 (DLDECQSQPCAHGGTCHDLVNGFRCDCAGTGYEGTHCE). 2 EGF-like domains span residues 223-259 (EVLECASAPCEHNASCLEGLGSFRCLCWPGYSGELCE) and 261-318 (DEDE…ADCG). N-linked (GlcNAc...) asparagine glycosylation occurs at Asn235. Residue Ser267 is glycosylated (O-linked (Glc...) serine). One can recognise an EGF-like 7; calcium-binding domain in the interval 320–356 (EVDECASRPCLNGGHCQDLPNGFQCHCPDGYAGPTCE). One can recognise an EGF-like 8; calcium-binding domain in the interval 358 to 394 (DVDECLSDPCLHGGTCSDTVAGYICRCPETWGGRDCS). The EGF-like 9 domain occupies 396–436 (QLTGCQGHTCPLAATCIPIFESGVHSYVCHCPPGTHGPFCG). A Laminin G-like 1 domain is found at 431–603 (HGPFCGQNTT…DLGENVLLGC (173 aa)). N-linked (GlcNAc...) asparagine glycans are attached at residues Asn438 and Asn478. Cystine bridges form between Cys579–Cys603, Cys609–Cys620, Cys614–Cys629, and Cys631–Cys640. The EGF-like 10 domain maps to 605-641 (RREQCRPLPCVHGGSCVDLWTHFRCDCARPHRGPTCA). The Laminin G-like 2 domain occupies 647 to 805 (ATFGLGGAPS…RQSWNLTAGC (159 aa)). 4 N-linked (GlcNAc...) asparagine glycosylation sites follow: Asn669, Asn690, Asn786, and Asn800. Intrachain disulfides connect Cys766–Cys805, Cys811–Cys822, Cys816–Cys831, and Cys833–Cys842. An EGF-like 11 domain is found at 807–843 (SEDMCSPDPCFNGGTCLVTWNDFHCTCPANFTGPTCA). 4 N-linked (GlcNAc...) asparagine glycosylation sites follow: Asn836, Asn886, Asn926, and Asn1009. The region spanning 871-1054 (EATFREGPPA…PGTPAPILGC (184 aa)) is the Laminin G-like 3 domain. Cystine bridges form between Cys1013–Cys1054, Cys1060–Cys1071, Cys1065–Cys1080, Cys1082–Cys1091, Cys1098–Cys1108, Cys1103–Cys1118, Cys1120–Cys1129, Cys1138–Cys1150, Cys1144–Cys1159, Cys1161–Cys1170, Cys1177–Cys1188, Cys1182–Cys1197, and Cys1199–Cys1208. EGF-like domains are found at residues 1056 to 1092 (GAPVCAPSPCLHDGACRDLFDAFACACGPGWEGPRCE), 1094 to 1130 (HVDPCHSAPCARGRCHTHPDGRFECRCPPGFGGPRCR), 1134 to 1171 (PSKECSLNVTCLDGSPCEGGSPAANCSCLEGLAGQRCQ), and 1173 to 1209 (PTLPCEANPCLNGGTCRAAGGVSECICNARFSGQFCE). 2 N-linked (GlcNAc...) asparagine glycosylation sites follow: Asn1141 and Asn1158. Residues 1225–1245 (VAVPAACACLLLLLLGLLSGI) form a helical membrane-spanning segment. The tract at residues 1249–1285 (RKRRQSEGTYSPSQQEVAGARLEMDSVLKVPPEERLI) is interaction with EPB41L5.

Belongs to the Crumbs protein family. In terms of assembly, associates with the gamma-secretase complex via interaction (via the transmembrane domain) with PSEN1/PS1. Interacts (via intracellular domain) with EPB41L5. Interacts with PALS1. In terms of processing, O-glucosylated by POGLUT1 at Ser-267; consists of an O-glucose trisaccharide, in which the O-glucose is elongated by the addition of two xylose residues. O-glucosylation is required for localization at the plasma membrane. Post-translationally, N-glycosylated. Expressed in glomeruli, podocytes of the glomerular capillary loops, and parietal glomerular epithelial cells in the kidney (at protein level). Expressed in retina, fetal eye and brain. Also expressed in kidney, RPE/choroid, and at low levels in lung, placenta, and heart.

The protein resides in the apical cell membrane. It localises to the cytoplasm. Its subcellular location is the cell junction. It is found in the secreted. Apical polarity protein that plays a central role during the epithelial-to-mesenchymal transition (EMT) at gastrulation, when newly specified mesodermal cells move inside the embryo. Acts by promoting cell ingression, the process by which cells leave the epithelial epiblast and move inside the embryo to form a new tissue layer. The anisotropic distribution of CRB2 and MYH10/myosin-IIB at cell edges define which cells will ingress: cells with high apical CRB2 are probably extruded from the epiblast by neighboring cells with high levels of apical MYH10/myosin-IIB. Plays a role in the maintenance of retinal neuroepithelium organization, structural integrity, adhesion, photoreceptor polarity and retinal photoreceptor layer thickness. May play a role in determining the length of cone photoreceptor outer segments and proliferation of late-born progenitor cells. Also required for maintenance of the apical polarity complex during development of the cortex. Inhibits gamma-secretase-dependent cleavage of APP and secretion of amyloid-beta peptide 40 and amyloid-beta peptide 42, and thereby inhibits gamma-secretase-dependent Notch transcription. This Homo sapiens (Human) protein is Protein crumbs homolog 2.